We begin with the raw amino-acid sequence, 287 residues long: Pantothenate synthetase (287 aa).

37–44 serves as a coordination point for ATP; sequence MGALHEGH. Residue His44 is the Proton donor of the active site. (R)-pantoate is bound at residue Gln68. Gln68 contacts beta-alanine. 154 to 157 is a binding site for ATP; that stretch reads GQKD. Gln160 is a (R)-pantoate binding site. ATP contacts are provided by residues Val183 and 191–194; that span reads LSSR.

It belongs to the pantothenate synthetase family. In terms of assembly, homodimer.

The protein resides in the cytoplasm. The catalysed reaction is (R)-pantoate + beta-alanine + ATP = (R)-pantothenate + AMP + diphosphate + H(+). It participates in cofactor biosynthesis; (R)-pantothenate biosynthesis; (R)-pantothenate from (R)-pantoate and beta-alanine: step 1/1. Catalyzes the condensation of pantoate with beta-alanine in an ATP-dependent reaction via a pantoyl-adenylate intermediate. The chain is Pantothenate synthetase from Leifsonia xyli subsp. xyli (strain CTCB07).